The sequence spans 217 residues: Large ribosomal subunit protein uL4c (217 aa).

The disordered stretch occupies residues 51–85; it reads HRNRNAHTQTRGEVSGGGRKPWKQKGTGRARAGSN.

Belongs to the universal ribosomal protein uL4 family. As to quaternary structure, part of the 50S ribosomal subunit.

The protein resides in the plastid. It localises to the chloroplast. Functionally, probably binds the 23S rRNA. The polypeptide is Large ribosomal subunit protein uL4c (rpl4) (Gracilaria tenuistipitata var. liui (Red alga)).